The sequence spans 127 residues: D-ribose pyranase (127 aa).

Histidine 20 (proton donor) is an active-site residue. Substrate is bound by residues aspartate 28, histidine 94, and 116–118; that span reads YSN.

This sequence belongs to the RbsD / FucU family. RbsD subfamily. In terms of assembly, homodecamer.

The protein localises to the cytoplasm. The enzyme catalyses beta-D-ribopyranose = beta-D-ribofuranose. It functions in the pathway carbohydrate metabolism; D-ribose degradation; D-ribose 5-phosphate from beta-D-ribopyranose: step 1/2. Its function is as follows. Catalyzes the interconversion of beta-pyran and beta-furan forms of D-ribose. The polypeptide is D-ribose pyranase (Cutibacterium acnes (strain DSM 16379 / KPA171202) (Propionibacterium acnes)).